The sequence spans 217 residues: Adenylate kinase (217 aa).

10–15 (GAGKGT) contributes to the ATP binding site. The interval 30-59 (STGDMLRAQVKAGTALGLEAKKHMDAGGLV) is NMP. AMP-binding positions include T31, R36, 57-59 (GLV), 85-88 (GFPR), and Q92. Positions 122–159 (GRRAHLASGRTYHVKFNPPKVEGIDDVTGEPLVQRDDD) are LID. ATP contacts are provided by residues R123 and 132–133 (TY). R156 and R167 together coordinate AMP. G203 provides a ligand contact to ATP.

The protein belongs to the adenylate kinase family. Monomer.

It is found in the cytoplasm. It carries out the reaction AMP + ATP = 2 ADP. It participates in purine metabolism; AMP biosynthesis via salvage pathway; AMP from ADP: step 1/1. Catalyzes the reversible transfer of the terminal phosphate group between ATP and AMP. Plays an important role in cellular energy homeostasis and in adenine nucleotide metabolism. This Dechloromonas aromatica (strain RCB) protein is Adenylate kinase.